The following is a 156-amino-acid chain: Small ribosomal subunit protein uS7c (156 aa).

This sequence belongs to the universal ribosomal protein uS7 family. In terms of assembly, part of the 30S ribosomal subunit.

The protein resides in the plastid. It localises to the chloroplast. One of the primary rRNA binding proteins, it binds directly to 16S rRNA where it nucleates assembly of the head domain of the 30S subunit. The protein is Small ribosomal subunit protein uS7c (rps7) of Zamia furfuracea (Cardboard cycad).